A 273-amino-acid chain; its full sequence is Nickel import ATP-binding protein NikE (273 aa).

One can recognise an ABC transporter domain in the interval 13–252; that stretch reads YRTGGLLRKR…AHPVGRQLQA (240 aa). 45 to 52 provides a ligand contact to ATP; it reads GSSGSGKS.

Belongs to the ABC transporter superfamily. Nickel importer (TC 3.A.1.5.3) family. As to quaternary structure, the complex is composed of two ATP-binding proteins (NikD and NikE), two transmembrane proteins (NikB and NikC) and a solute-binding protein (NikA).

It is found in the cell inner membrane. It catalyses the reaction Ni(2+)(out) + ATP + H2O = Ni(2+)(in) + ADP + phosphate + H(+). Part of the ABC transporter complex NikABCDE involved in nickel import. Responsible for energy coupling to the transport system. This Pseudomonas putida (strain ATCC 47054 / DSM 6125 / CFBP 8728 / NCIMB 11950 / KT2440) protein is Nickel import ATP-binding protein NikE.